Here is a 266-residue protein sequence, read N- to C-terminus: MVKAKKQYGQNFLIDKSVLAKIIQAIPKEMNNIIEIGPGLGDLTQELLKISQVKAYEIDNDLIPILKKKFQKELECGKFNLIHQDASEAFNPSLDEKPYFLVANLPYYVASHIILKALEDKNCLGLIVMVQREMAEKFCAKEGNSEFSSLGVLSAMICERKILFDVDPQCFNPPPKVMSAVMSLIKTKDFDELCEIENFKNFLKDCFKAPRKQLLGNLKTYKAKVLEVLSTLGLKENIRPHEICVDLYLKIYDKLKDEYGRKQRDK.

S-adenosyl-L-methionine-binding residues include asparagine 11, leucine 13, glycine 37, glutamate 57, aspartate 85, and asparagine 104.

This sequence belongs to the class I-like SAM-binding methyltransferase superfamily. rRNA adenine N(6)-methyltransferase family. RsmA subfamily.

It is found in the cytoplasm. The enzyme catalyses adenosine(1518)/adenosine(1519) in 16S rRNA + 4 S-adenosyl-L-methionine = N(6)-dimethyladenosine(1518)/N(6)-dimethyladenosine(1519) in 16S rRNA + 4 S-adenosyl-L-homocysteine + 4 H(+). In terms of biological role, specifically dimethylates two adjacent adenosines (A1518 and A1519) in the loop of a conserved hairpin near the 3'-end of 16S rRNA in the 30S particle. May play a critical role in biogenesis of 30S subunits. In Campylobacter jejuni (strain RM1221), this protein is Ribosomal RNA small subunit methyltransferase A.